Reading from the N-terminus, the 708-residue chain is tRNA 5-methylaminomethyl-2-thiouridine biosynthesis bifunctional protein MnmC (708 aa).

The segment at 1–278 (MTAEPNKPCQ…ERQVLRQQDA (278 aa)) is tRNA (mnm(5)s(2)U34)-methyltransferase. The tract at residues 301–708 (IGGGLASAHL…LRKLLKGKAL (408 aa)) is FAD-dependent cmnm(5)s(2)U34 oxidoreductase.

This sequence in the N-terminal section; belongs to the methyltransferase superfamily. tRNA (mnm(5)s(2)U34)-methyltransferase family. It in the C-terminal section; belongs to the DAO family. FAD is required as a cofactor.

Its subcellular location is the cytoplasm. The catalysed reaction is 5-aminomethyl-2-thiouridine(34) in tRNA + S-adenosyl-L-methionine = 5-methylaminomethyl-2-thiouridine(34) in tRNA + S-adenosyl-L-homocysteine + H(+). Its function is as follows. Catalyzes the last two steps in the biosynthesis of 5-methylaminomethyl-2-thiouridine (mnm(5)s(2)U) at the wobble position (U34) in tRNA. Catalyzes the FAD-dependent demodification of cmnm(5)s(2)U34 to nm(5)s(2)U34, followed by the transfer of a methyl group from S-adenosyl-L-methionine to nm(5)s(2)U34, to form mnm(5)s(2)U34. The protein is tRNA 5-methylaminomethyl-2-thiouridine biosynthesis bifunctional protein MnmC of Shewanella baltica (strain OS195).